The primary structure comprises 215 residues: Large ribosomal subunit protein uL3 (215 aa).

Q153 bears the N5-methylglutamine mark.

It belongs to the universal ribosomal protein uL3 family. Part of the 50S ribosomal subunit. Forms a cluster with proteins L14 and L19. Methylated by PrmB.

One of the primary rRNA binding proteins, it binds directly near the 3'-end of the 23S rRNA, where it nucleates assembly of the 50S subunit. The chain is Large ribosomal subunit protein uL3 from Nitrosococcus oceani (strain ATCC 19707 / BCRC 17464 / JCM 30415 / NCIMB 11848 / C-107).